A 752-amino-acid polypeptide reads, in one-letter code: Polyribonucleotide nucleotidyltransferase (752 aa).

Residues aspartate 519 and aspartate 525 each coordinate Mg(2+). The KH domain maps to 585 to 644 (PRVIAVKIPVDKIGEVIGPKGKMINQIQEDTGADISIEDDGTVYIGATNGPSADAARSAI). One can recognise an S1 motif domain in the interval 656 to 728 (GERYLGTVVK…DRGKLSLSPV (73 aa)). The tract at residues 727 to 752 (PVVAEEEGAEGAERAHATEPAEGAEI) is disordered.

It belongs to the polyribonucleotide nucleotidyltransferase family. It depends on Mg(2+) as a cofactor.

Its subcellular location is the cytoplasm. The enzyme catalyses RNA(n+1) + phosphate = RNA(n) + a ribonucleoside 5'-diphosphate. Functionally, involved in mRNA degradation. Catalyzes the phosphorolysis of single-stranded polyribonucleotides processively in the 3'- to 5'-direction. The polypeptide is Polyribonucleotide nucleotidyltransferase (Pseudarthrobacter chlorophenolicus (strain ATCC 700700 / DSM 12829 / CIP 107037 / JCM 12360 / KCTC 9906 / NCIMB 13794 / A6) (Arthrobacter chlorophenolicus)).